A 384-amino-acid polypeptide reads, in one-letter code: MSWQEKINAALDARRAADALRRRYPVAQGAGRWLVADDRQYLNFSSNDYLGLSHHPQIIRAWQQGAEQFGVGSGGSGHVSGYSVAHQALEEELAEWLGYSRALLFISGFAANQAVIAAMMAKEDRIVADRLSHASLLEAASLSPSQLRRFVHNDVTHLARLLASPCPGQQLVVTEGVFSMDGDSAPLAEIQQVTQQHNGWLMVDDAHGTGVIGEQGRGSCWLQKVKPELLVVTFGKGFGVSGAAVLCSSTVADYLLQFARHLIYNTSMPPAQAQALRASLAVIRRDEGDARREKLVSLIARFRAGVQDLPFTLADSCSAIQPLIVGDNSRALQLAEKLRQQGCWVTAIRPPTVPAGTARLRLTLTAAHEMQDIDRLLEVLHGNG.

Arginine 21 is a substrate binding site. 108 to 109 serves as a coordination point for pyridoxal 5'-phosphate; the sequence is GF. A substrate-binding site is contributed by histidine 133. Pyridoxal 5'-phosphate is bound by residues serine 179, histidine 207, and threonine 233. Lysine 236 is modified (N6-(pyridoxal phosphate)lysine). Threonine 352 contributes to the substrate binding site.

It belongs to the class-II pyridoxal-phosphate-dependent aminotransferase family. BioF subfamily. Homodimer. It depends on pyridoxal 5'-phosphate as a cofactor.

The enzyme catalyses 6-carboxyhexanoyl-[ACP] + L-alanine + H(+) = (8S)-8-amino-7-oxononanoate + holo-[ACP] + CO2. It participates in cofactor biosynthesis; biotin biosynthesis. Catalyzes the decarboxylative condensation of pimeloyl-[acyl-carrier protein] and L-alanine to produce 8-amino-7-oxononanoate (AON), [acyl-carrier protein], and carbon dioxide. This is 8-amino-7-oxononanoate synthase from Shigella boydii serotype 18 (strain CDC 3083-94 / BS512).